The primary structure comprises 67 residues: DNA gyrase inhibitor YacG (67 aa).

Positions 10, 13, 29, and 33 each coordinate Zn(2+).

The protein belongs to the DNA gyrase inhibitor YacG family. As to quaternary structure, interacts with GyrB. The cofactor is Zn(2+).

Functionally, inhibits all the catalytic activities of DNA gyrase by preventing its interaction with DNA. Acts by binding directly to the C-terminal domain of GyrB, which probably disrupts DNA binding by the gyrase. The protein is DNA gyrase inhibitor YacG of Pasteurella multocida (strain Pm70).